Consider the following 416-residue polypeptide: E3 ubiquitin-protein ligase RNFT1 (416 aa).

Disordered stretches follow at residues 1-50 (MKHR…MSLP) and 68-117 (DLSS…DSRE). Residues 7 to 19 (HERQSSTESKNLK) are compositionally biased toward basic and acidic residues. Polar residues-rich tracts occupy residues 20-45 (ETTQLIMQSSSDHTHHQLGSNDSPSA) and 68-80 (DLSSQDSQHVARS). Basic residues predominate over residues 81 to 100 (NSRRVRPSTHGRSPSRHGHT). The next 6 membrane-spanning stretches (helical) occupy residues 146–166 (LVVQHITGISVGIGLLTTFLY), 184–204 (LQCLWVLVFLLFSSFLLYYTF), 214–234 (VFMNPSLGPLHFFDALWVVGI), 237–257 (FIGKFFFMGLKCIILLVPSFV), 265–287 (YWYMALEELAQCYCTLVSTPVWF), and 302–322 (WHFGILLALLYLILKILIIFG). The tract at residues 349-400 (CSEADGMCAICQAEFTKPIALICQHVFCEECISSWFNKEKTCPLCRTLISNH) is required for ubiquitin ligase activity and for protection against ER stress-induced cell death. An RING-type zinc finger spans residues 356–394 (CAICQAEFTKPIALICQHVFCEECISSWFNKEKTCPLCR).

It is found in the endoplasmic reticulum membrane. The enzyme catalyses S-ubiquitinyl-[E2 ubiquitin-conjugating enzyme]-L-cysteine + [acceptor protein]-L-lysine = [E2 ubiquitin-conjugating enzyme]-L-cysteine + N(6)-ubiquitinyl-[acceptor protein]-L-lysine.. Its pathway is protein modification; protein ubiquitination. In terms of biological role, E3 ubiquitin-protein ligase that acts in the endoplasmic reticulum (ER)-associated degradation (ERAD) pathway, which targets misfolded proteins that accumulate in the endoplasmic reticulum (ER) for ubiquitination and subsequent proteasome-mediated degradation. Protects cells from ER stress-induced apoptosis. In Xenopus laevis (African clawed frog), this protein is E3 ubiquitin-protein ligase RNFT1 (rnft1).